The sequence spans 149 residues: Large ribosomal subunit protein uL13 (149 aa).

The protein belongs to the universal ribosomal protein uL13 family. In terms of assembly, part of the 50S ribosomal subunit.

Its function is as follows. This protein is one of the early assembly proteins of the 50S ribosomal subunit, although it is not seen to bind rRNA by itself. It is important during the early stages of 50S assembly. This Thermotoga maritima (strain ATCC 43589 / DSM 3109 / JCM 10099 / NBRC 100826 / MSB8) protein is Large ribosomal subunit protein uL13.